Reading from the N-terminus, the 573-residue chain is 2-succinyl-5-enolpyruvyl-6-hydroxy-3-cyclohexene-1-carboxylate synthase (573 aa).

It belongs to the TPP enzyme family. MenD subfamily. In terms of assembly, homodimer. The cofactor is Mg(2+). Mn(2+) serves as cofactor. It depends on thiamine diphosphate as a cofactor.

It carries out the reaction isochorismate + 2-oxoglutarate + H(+) = 5-enolpyruvoyl-6-hydroxy-2-succinyl-cyclohex-3-ene-1-carboxylate + CO2. It participates in quinol/quinone metabolism; 1,4-dihydroxy-2-naphthoate biosynthesis; 1,4-dihydroxy-2-naphthoate from chorismate: step 2/7. The protein operates within quinol/quinone metabolism; menaquinone biosynthesis. Functionally, catalyzes the thiamine diphosphate-dependent decarboxylation of 2-oxoglutarate and the subsequent addition of the resulting succinic semialdehyde-thiamine pyrophosphate anion to isochorismate to yield 2-succinyl-5-enolpyruvyl-6-hydroxy-3-cyclohexene-1-carboxylate (SEPHCHC). This chain is 2-succinyl-5-enolpyruvyl-6-hydroxy-3-cyclohexene-1-carboxylate synthase, found in Shewanella baltica (strain OS185).